A 488-amino-acid chain; its full sequence is Glutamate--tRNA ligase (488 aa).

A 'HIGH' region motif is present at residues 16–26; that stretch reads PSPTGEPHVGT. Positions 257-261 match the 'KMSKS' region motif; the sequence is KLSKR. An ATP-binding site is contributed by Lys260.

The protein belongs to the class-I aminoacyl-tRNA synthetase family. Glutamate--tRNA ligase type 1 subfamily. In terms of assembly, monomer.

It is found in the cytoplasm. The enzyme catalyses tRNA(Glu) + L-glutamate + ATP = L-glutamyl-tRNA(Glu) + AMP + diphosphate. Catalyzes the attachment of glutamate to tRNA(Glu) in a two-step reaction: glutamate is first activated by ATP to form Glu-AMP and then transferred to the acceptor end of tRNA(Glu). This is Glutamate--tRNA ligase from Rhizobium etli (strain ATCC 51251 / DSM 11541 / JCM 21823 / NBRC 15573 / CFN 42).